Consider the following 76-residue polypeptide: Acyl carrier protein (76 aa).

The Carrier domain maps to 2–76 (SNIEERVIKV…QSAIDFVKSR (75 aa)). Ser37 carries the O-(pantetheine 4'-phosphoryl)serine modification.

This sequence belongs to the acyl carrier protein (ACP) family. Post-translationally, 4'-phosphopantetheine is transferred from CoA to a specific serine of apo-ACP by AcpS. This modification is essential for activity because fatty acids are bound in thioester linkage to the sulfhydryl of the prosthetic group.

The protein localises to the cytoplasm. The protein operates within lipid metabolism; fatty acid biosynthesis. Functionally, carrier of the growing fatty acid chain in fatty acid biosynthesis. This chain is Acyl carrier protein, found in Dichelobacter nodosus (strain VCS1703A).